We begin with the raw amino-acid sequence, 335 residues long: Holliday junction branch migration complex subunit RuvB (335 aa).

Positions 1–181 (MTRILDNDLI…FGITGHMEYY (181 aa)) are large ATPase domain (RuvB-L). ATP is bound by residues leucine 20, arginine 21, glycine 62, lysine 65, threonine 66, threonine 67, 128-130 (EDF), arginine 171, tyrosine 181, and arginine 218. Threonine 66 lines the Mg(2+) pocket. The segment at 182 to 252 (QTADLTEIVE…ITDKALTMLD (71 aa)) is small ATPAse domain (RuvB-S). Residues 255 to 335 (QEGLDYVDQK…GYPYEKTIKT (81 aa)) form a head domain (RuvB-H) region. DNA contacts are provided by arginine 291, arginine 310, arginine 312, and arginine 315.

This sequence belongs to the RuvB family. Homohexamer. Forms an RuvA(8)-RuvB(12)-Holliday junction (HJ) complex. HJ DNA is sandwiched between 2 RuvA tetramers; dsDNA enters through RuvA and exits via RuvB. An RuvB hexamer assembles on each DNA strand where it exits the tetramer. Each RuvB hexamer is contacted by two RuvA subunits (via domain III) on 2 adjacent RuvB subunits; this complex drives branch migration. In the full resolvosome a probable DNA-RuvA(4)-RuvB(12)-RuvC(2) complex forms which resolves the HJ.

It localises to the cytoplasm. It catalyses the reaction ATP + H2O = ADP + phosphate + H(+). In terms of biological role, the RuvA-RuvB-RuvC complex processes Holliday junction (HJ) DNA during genetic recombination and DNA repair, while the RuvA-RuvB complex plays an important role in the rescue of blocked DNA replication forks via replication fork reversal (RFR). RuvA specifically binds to HJ cruciform DNA, conferring on it an open structure. The RuvB hexamer acts as an ATP-dependent pump, pulling dsDNA into and through the RuvAB complex. RuvB forms 2 homohexamers on either side of HJ DNA bound by 1 or 2 RuvA tetramers; 4 subunits per hexamer contact DNA at a time. Coordinated motions by a converter formed by DNA-disengaged RuvB subunits stimulates ATP hydrolysis and nucleotide exchange. Immobilization of the converter enables RuvB to convert the ATP-contained energy into a lever motion, pulling 2 nucleotides of DNA out of the RuvA tetramer per ATP hydrolyzed, thus driving DNA branch migration. The RuvB motors rotate together with the DNA substrate, which together with the progressing nucleotide cycle form the mechanistic basis for DNA recombination by continuous HJ branch migration. Branch migration allows RuvC to scan DNA until it finds its consensus sequence, where it cleaves and resolves cruciform DNA. The protein is Holliday junction branch migration complex subunit RuvB of Streptococcus equi subsp. equi (strain 4047).